A 224-amino-acid polypeptide reads, in one-letter code: ATP-dependent dethiobiotin synthetase BioD (224 aa).

ATP is bound at residue 13-18 (NVGKTI). Thr-17 is a binding site for Mg(2+). The active site involves Lys-38. Residue Ser-42 coordinates substrate. ATP contacts are provided by residues Asp-55, 116–119 (EGAG), 176–177 (NN), and Asn-211. Mg(2+)-binding residues include Asp-55 and Glu-116.

This sequence belongs to the dethiobiotin synthetase family. Homodimer. It depends on Mg(2+) as a cofactor.

The protein resides in the cytoplasm. It carries out the reaction (7R,8S)-7,8-diammoniononanoate + CO2 + ATP = (4R,5S)-dethiobiotin + ADP + phosphate + 3 H(+). The protein operates within cofactor biosynthesis; biotin biosynthesis; biotin from 7,8-diaminononanoate: step 1/2. In terms of biological role, catalyzes a mechanistically unusual reaction, the ATP-dependent insertion of CO2 between the N7 and N8 nitrogen atoms of 7,8-diaminopelargonic acid (DAPA, also called 7,8-diammoniononanoate) to form a ureido ring. The polypeptide is ATP-dependent dethiobiotin synthetase BioD (Buchnera aphidicola subsp. Acyrthosiphon pisum (strain 5A)).